Consider the following 314-residue polypeptide: Solute carrier family 25 member 33 (314 aa).

Solcar repeat units follow at residues 4–111 (KDTL…SKET), 119–206 (NSGV…LKKY), and 224–308 (SDFL…IVHL). 6 helical membrane passes run 7–27 (LLHL…TCPL), 44–58 (VFQV…AGVI), 114–134 (GIFV…AAFI), 183–203 (LTAS…YETL), 226–246 (FLGL…IAYP), and 291–311 (QIPN…LLAE).

The protein belongs to the mitochondrial carrier (TC 2.A.29) family.

The protein resides in the mitochondrion inner membrane. Functionally, mitochondrial transporter that imports/exports pyrimidine nucleotides into and from mitochondria which participates in dendritic cell endocytosis. This is Solute carrier family 25 member 33 (slc25a33) from Danio rerio (Zebrafish).